A 233-amino-acid polypeptide reads, in one-letter code: uncharacterized protein (233 aa).

A disordered region spans residues 21-43; that stretch reads RWRTATSADHPRRGRPAAQAVRR.

This is an uncharacterized protein from Mycobacterium tuberculosis (strain CDC 1551 / Oshkosh).